We begin with the raw amino-acid sequence, 258 residues long: ER membrane protein complex subunit 3 (258 aa).

3 consecutive transmembrane segments (helical) span residues 8–28 (PALR…IGIL), 123–143 (VVPQ…FILL), and 173–193 (SISW…LLLG).

This sequence belongs to the EMC3 family.

It is found in the cytoplasm. The protein resides in the membrane. The protein is ER membrane protein complex subunit 3 of Schizosaccharomyces pombe (strain 972 / ATCC 24843) (Fission yeast).